Reading from the N-terminus, the 115-residue chain is Ig heavy chain V-III region J606 (115 aa).

In terms of domain architecture, Ig-like spans 1–114; that stretch reads EVKLEESGGG…WGQGTLVTVS (114 aa). Cysteines 22 and 98 form a disulfide.

In Mus musculus (Mouse), this protein is Ig heavy chain V-III region J606.